The sequence spans 248 residues: Pyruvate formate-lyase-activating enzyme (248 aa).

One can recognise a Radical SAM core domain in the interval 17–248; it reads VDGPGIRFIV…NKILETSSYK (232 aa). Residues Cys-31, Cys-35, and Cys-38 each coordinate [4Fe-4S] cluster. S-adenosyl-L-methionine contacts are provided by residues 37–39, Gly-80, 135–137, and His-208; these read FCH and DIK.

The protein belongs to the organic radical-activating enzymes family. [4Fe-4S] cluster is required as a cofactor.

The protein localises to the cytoplasm. The enzyme catalyses glycyl-[formate C-acetyltransferase] + reduced [flavodoxin] + S-adenosyl-L-methionine = glycin-2-yl radical-[formate C-acetyltransferase] + semiquinone [flavodoxin] + 5'-deoxyadenosine + L-methionine + H(+). Functionally, activation of pyruvate formate-lyase under anaerobic conditions by generation of an organic free radical, using S-adenosylmethionine and reduced flavodoxin as cosubstrates to produce 5'-deoxy-adenosine. The polypeptide is Pyruvate formate-lyase-activating enzyme (pflA) (Listeria innocua serovar 6a (strain ATCC BAA-680 / CLIP 11262)).